A 251-amino-acid polypeptide reads, in one-letter code: GTP cyclohydrolase FolE2 (251 aa).

This sequence belongs to the GTP cyclohydrolase IV family.

The catalysed reaction is GTP + H2O = 7,8-dihydroneopterin 3'-triphosphate + formate + H(+). The protein operates within cofactor biosynthesis; 7,8-dihydroneopterin triphosphate biosynthesis; 7,8-dihydroneopterin triphosphate from GTP: step 1/1. In terms of biological role, converts GTP to 7,8-dihydroneopterin triphosphate. The sequence is that of GTP cyclohydrolase FolE2 from Desulfotalea psychrophila (strain LSv54 / DSM 12343).